The following is a 122-amino-acid chain: Large ribosomal subunit protein uL14 (122 aa).

This sequence belongs to the universal ribosomal protein uL14 family. As to quaternary structure, part of the 50S ribosomal subunit. Forms a cluster with proteins L3 and L19. In the 70S ribosome, L14 and L19 interact and together make contacts with the 16S rRNA in bridges B5 and B8.

Functionally, binds to 23S rRNA. Forms part of two intersubunit bridges in the 70S ribosome. This chain is Large ribosomal subunit protein uL14, found in Borrelia hermsii (strain HS1 / DAH).